The chain runs to 287 residues: MGGGGGLPEPEDSVLFRRGTGQSDDSDIWDDTALIKAYDKAVASFKHALKNGDISEASDKPKSTPKRKPAKKNKSQKKNATTALKQWKVGDKCSAVWSEDGCIYPATIASIDFKRETCVVVYTGYGNREEQNVSDLLSPACEVANNVEQDTQENENESQISTDESENSSRSPGNKPNNIKSKAAPWNSFLPPPPPMSGSGLGPGKPGVKFSGPPPPPPPPHFLSCWLPPFPSGPPIIPPPPPICPDSLDDADALGSMLISWYMSGYHTGYYMGFKQNQKEGRCSHFN.

The tract at residues 1–27 (MGGGGGLPEPEDSVLFRRGTGQSDDSD) is disordered. The tract at residues 8–39 (PEPEDSVLFRRGTGQSDDSDIWDDTALIKAYD) is P1 (binding site for GEMIN2). Thr-20 is modified (phosphothreonine). Phosphoserine occurs at positions 23 and 26. A Glycyl lysine isopeptide (Lys-Gly) (interchain with G-Cter in SUMO2) cross-link involves residue Lys-46. Residues 52–83 (GDISEASDKPKSTPKRKPAKKNKSQKKNATTA) form a disordered region. Residues 63–77 (STPKRKPAKKNKSQK) show a composition bias toward basic residues. Thr-64 bears the Phosphothreonine mark. The region spanning 86–146 (QWKVGDKCSA…LSPACEVANN (61 aa)) is the Tudor domain. Residues 92 to 205 (KCSAVWSEDG…MSGSGLGPGK (114 aa)) form a required for interaction with RPP20/POP7 region. Positions 148–216 (EQDTQENENE…GVKFSGPPPP (69 aa)) are disordered. Residues 157-180 (ESQISTDESENSSRSPGNKPNNIK) show a composition bias toward polar residues. A Glycyl lysine isopeptide (Lys-Gly) (interchain with G-Cter in SUMO2) cross-link involves residue Lys-205. Residues 234-261 (PPIIPPPPPICPDSLDDADALGSMLISW) are P2 (binding site for SM B). Residues 273 to 287 (GFKQNQKEGRCSHFN) are required for interaction with SYNCRIP.

It belongs to the SMN family. Homooligomer; may form higher order homooligomers in the dimer to octamer range. Part of the core SMN complex that contains SMN1, GEMIN2/SIP1, DDX20/GEMIN3, GEMIN4, GEMIN5, GEMIN6, GEMIN7, GEMIN8 and STRAP/UNRIP. Part of the SMN-Sm complex that contains SMN1, GEMIN2/SIP1, DDX20/GEMIN3, GEMIN4, GEMIN5, GEMIN6, GEMIN7, GEMIN8, STRAP/UNRIP and the Sm proteins SNRPB, SNRPD1, SNRPD2, SNRPD3, SNRPE, SNRPF and SNRPG. Component of an import snRNP complex composed of KPNB1, RNUT1, SMN1 and ZNF259. Interacts with DDX20, FBL, NOLA1, RNUT1, SYNCRIP and with several spliceosomal snRNP core Sm proteins, including SNRPB, SNRPD1, SNRPD2, SNRPD3, SNRPE and ILF3. Interacts with GEMIN2; the interaction is direct. Interacts with GEMIN3; the interaction is direct. Interacts with GEMIN8; the interaction is direct. Interacts with SNRPB; the interaction is direct. Interacts (via Tudor domain) with SNRPD1 (via C-terminus); the interaction is direct. Interacts with SNRPD2; the interaction is direct. Interacts (via Tudor domain) with SNRPD3 (via C-terminus); the interaction is direct. Interacts with SNRPE; the interaction is direct. Interacts with OSTF1, LSM10, LSM11 and RPP20/POP7. Interacts (via C-terminal region) with ZPR1 (via C-terminal region). Interacts (via Tudor domain) with COIL. Interacts with SETX; recruits SETX to POLR2A. Interacts with POLR2A (via the C-terminal domain (CTD)). Interacts with PRMT5. Interacts with XRN2. Interacts (via C-terminus) with FMR1 (via C-terminus); the interaction is direct and occurs in a RNA-independent manner. Interacts (via Tudor domain) with SF3B2 ('Arg-508'-methylated form). Interacts with WRAP53/TCAB1. Interacts (via Tudor domain) with ELAVL4 in an RNA-independent manner; the interaction is required for localization of ELAVL4 to RNA granules. Interacts with FRG1.

The protein resides in the nucleus. The protein localises to the gem. It is found in the cajal body. Its subcellular location is the cytoplasm. It localises to the cytoplasmic granule. The protein resides in the perikaryon. The protein localises to the cell projection. It is found in the neuron projection. Its subcellular location is the axon. It localises to the myofibril. The protein resides in the sarcomere. The protein localises to the z line. Functionally, the SMN complex catalyzes the assembly of small nuclear ribonucleoproteins (snRNPs), the building blocks of the spliceosome, and thereby plays an important role in the splicing of cellular pre-mRNAs. Most spliceosomal snRNPs contain a common set of Sm proteins SNRPB, SNRPD1, SNRPD2, SNRPD3, SNRPE, SNRPF and SNRPG that assemble in a heptameric protein ring on the Sm site of the small nuclear RNA to form the core snRNP (Sm core). In the cytosol, the Sm proteins SNRPD1, SNRPD2, SNRPE, SNRPF and SNRPG are trapped in an inactive 6S pICln-Sm complex by the chaperone CLNS1A that controls the assembly of the core snRNP. To assemble core snRNPs, the SMN complex accepts the trapped 5Sm proteins from CLNS1A forming an intermediate. Binding of snRNA inside 5Sm ultimately triggers eviction of the SMN complex, thereby allowing binding of SNRPD3 and SNRPB to complete assembly of the core snRNP. Within the SMN complex, SMN1 acts as a structural backbone and together with GEMIN2 it gathers the Sm complex subunits. Ensures the correct splicing of U12 intron-containing genes that may be important for normal motor and proprioceptive neurons development. Also required for resolving RNA-DNA hybrids created by RNA polymerase II, that form R-loop in transcription terminal regions, an important step in proper transcription termination. May also play a role in the metabolism of small nucleolar ribonucleoprotein (snoRNPs). This is Survival motor neuron protein (SMN1) from Canis lupus familiaris (Dog).